The chain runs to 159 residues: Heat shock protein beta-9 (159 aa).

The sHSP domain maps to 36–147 (LLRDSPAAQE…EAQTGPSPRL (112 aa)).

The protein belongs to the small heat shock protein (HSP20) family. Testis specific.

The protein localises to the cytoplasm. Its subcellular location is the nucleus. The chain is Heat shock protein beta-9 (HSPB9) from Homo sapiens (Human).